The sequence spans 850 residues: Protein stoned-A (850 aa).

Basic residues predominate over residues 1-16 (MLKLPKGLKKKKKKSK). 2 disordered regions span residues 1-95 (MLKL…AAGG) and 125-164 (KESF…LGQI). The tract at residues 26 to 290 (ELEQYKRDLK…QNLLLSESIE (265 aa)) is interaction with Syt. A compositionally biased stretch (basic and acidic residues) spans 28–38 (EQYKRDLKAKQ). The segment covering 78 to 91 (ILNAQQQLSDQNQG) has biased composition (polar residues). Over residues 136–164 (AEKKKQKEEEAARLEAEQQEREKQRLGQI) the composition is skewed to basic and acidic residues. Positions 224-226 (DPF) match the DPF 1 motif. 2 disordered regions span residues 345–375 (EEEE…EEDD) and 412–498 (GSWA…PPFL). Pro residues predominate over residues 431–440 (PPPPVRPPTG). Residues 451–462 (SEDEEENPEDDP) are compositionally biased toward acidic residues. 2 consecutive short sequence motifs (DPF) follow at residues 461–463 (DPF) and 535–537 (DPF). Disordered stretches follow at residues 573–610 (HSLS…QRKS), 634–673 (GNEL…TSHV), 738–760 (RKKL…FDTS), and 800–825 (LGLG…IDPF). Basic and acidic residues-rich tracts occupy residues 574–588 (SLSD…DQKE) and 596–607 (LEQKETDFDTAQ). Short sequence motifs (DPF) lie at residues 666–668 (DPF), 755–757 (DPF), and 823–825 (DPF).

In terms of assembly, interacts with the second C2 domain of Syt.

It localises to the cytoplasm. It is found in the synapse. The protein resides in the cytoplasmic vesicle. Its subcellular location is the secretory vesicle. The protein localises to the synaptic vesicle. Functionally, adapter protein involved in endocytic recycling of synaptic vesicles membranes. May act by mediating the retrieval of synaptotagmin protein Syt from the plasma membrane, thereby facilitating the internalization of multiple synaptic vesicles from the plasma membrane. The sequence is that of Protein stoned-A (stnA) from Drosophila melanogaster (Fruit fly).